Here is a 76-residue protein sequence, read N- to C-terminus: Acyl carrier protein (76 aa).

The region spanning 1-76 is the Carrier domain; it reads MSLEEKVKNI…DVIEYIKAHT (76 aa). At Ser-36 the chain carries O-(pantetheine 4'-phosphoryl)serine.

The protein belongs to the acyl carrier protein (ACP) family. Post-translationally, 4'-phosphopantetheine is transferred from CoA to a specific serine of apo-ACP by AcpS. This modification is essential for activity because fatty acids are bound in thioester linkage to the sulfhydryl of the prosthetic group.

Its subcellular location is the cytoplasm. It functions in the pathway lipid metabolism; fatty acid biosynthesis. Carrier of the growing fatty acid chain in fatty acid biosynthesis. The sequence is that of Acyl carrier protein from Desulfatibacillum aliphaticivorans.